We begin with the raw amino-acid sequence, 147 residues long: MRYKMKVRFKYYEFQGGIYQTCGVYESDNEENDGVITDYLSTIPGSYADNGFKVLAAVKDPTITRDWISSQAFDALIEHDQIKVGFYLLDDMEEEDIPDDVDERDTAPRFIPRKEFAYLLEKWLDFYHRPITDINYQEIIDTKEAYL.

Belongs to the UPF0275 family.

The sequence is that of UPF0275 protein PM0504 from Pasteurella multocida (strain Pm70).